The chain runs to 401 residues: Dual-specificity RNA methyltransferase RlmN (401 aa).

Catalysis depends on E114, which acts as the Proton acceptor. The 246-residue stretch at 120–365 (DKTRGTLCVS…TMVRRTRGDD (246 aa)) folds into the Radical SAM core domain. C127 and C370 are oxidised to a cystine. Positions 134, 138, and 141 each coordinate [4Fe-4S] cluster. Residues 187–188 (GE), S219, 241–243 (SLH), and N327 contribute to the S-adenosyl-L-methionine site. The active-site S-methylcysteine intermediate is the C370.

Belongs to the radical SAM superfamily. RlmN family. [4Fe-4S] cluster is required as a cofactor.

The protein localises to the cytoplasm. It catalyses the reaction adenosine(2503) in 23S rRNA + 2 reduced [2Fe-2S]-[ferredoxin] + 2 S-adenosyl-L-methionine = 2-methyladenosine(2503) in 23S rRNA + 5'-deoxyadenosine + L-methionine + 2 oxidized [2Fe-2S]-[ferredoxin] + S-adenosyl-L-homocysteine. It carries out the reaction adenosine(37) in tRNA + 2 reduced [2Fe-2S]-[ferredoxin] + 2 S-adenosyl-L-methionine = 2-methyladenosine(37) in tRNA + 5'-deoxyadenosine + L-methionine + 2 oxidized [2Fe-2S]-[ferredoxin] + S-adenosyl-L-homocysteine. Specifically methylates position 2 of adenine 2503 in 23S rRNA and position 2 of adenine 37 in tRNAs. m2A2503 modification seems to play a crucial role in the proofreading step occurring at the peptidyl transferase center and thus would serve to optimize ribosomal fidelity. This is Dual-specificity RNA methyltransferase RlmN from Stenotrophomonas maltophilia (strain K279a).